The primary structure comprises 844 residues: Aminopeptidase N (844 aa).

Substrate contacts are provided by residues Glu-120 and 253 to 257 (GAMEN). His-289 contributes to the Zn(2+) binding site. Glu-290 serves as the catalytic Proton acceptor. His-293 and Glu-312 together coordinate Zn(2+).

It belongs to the peptidase M1 family. In terms of assembly, monomer. Zn(2+) serves as cofactor.

It is found in the cytoplasm. The enzyme catalyses Release of an N-terminal amino acid, Xaa-|-Yaa- from a peptide, amide or arylamide. Xaa is preferably Ala, but may be most amino acids including Pro (slow action). When a terminal hydrophobic residue is followed by a prolyl residue, the two may be released as an intact Xaa-Pro dipeptide.. Aminopeptidase N is involved in the degradation of intracellular peptides generated by protein breakdown during normal growth as well as in response to nutrient starvation. The sequence is that of Aminopeptidase N (pepN) from Lactobacillus helveticus (Lactobacillus suntoryeus).